The primary structure comprises 353 residues: Phenol 2-monooxygenase, reductase component DmpP (353 aa).

Residues 3-93 (YNVTIEPTGE…DLVIEADVDA (91 aa)) form the 2Fe-2S ferredoxin-type domain. [2Fe-2S] cluster-binding residues include Cys37, Cys42, Cys45, and Cys77. The region spanning 102–201 (VEDYRGVVSA…SGPYGQFFVR (100 aa)) is the FAD-binding FR-type domain.

In terms of assembly, the multicomponent enzyme phenol hydroxylase is formed by DmpL (P1 component), DmpM (P2 component), DmpN (P3 component), DmpO (P4 component) and DmpP (P5 component). The cofactor is FAD. [2Fe-2S] cluster is required as a cofactor.

The enzyme catalyses phenol + NADH + O2 + H(+) = catechol + NAD(+) + H2O. The protein operates within aromatic compound metabolism; phenol degradation. Its function is as follows. Part of a multicomponent enzyme which catalyzes the degradation of phenol and some of its methylated derivatives. DmpP probably transfers electrons from NADH, via FAD and the iron-sulfur center, to the oxygenase component of the complex. Required for growth on phenol and for in vitro phenol hydroxylase activity. The chain is Phenol 2-monooxygenase, reductase component DmpP from Pseudomonas sp. (strain CF600).